Reading from the N-terminus, the 547-residue chain is CAP-Gly domain-containing linker protein 3 (547 aa).

The interval 1-49 (MTKTDPAPMAPPPRGEEEEEEEEDEPVPEAPSPTQERRQKPVVHPSAPA) is disordered. Positions 16–27 (EEEEEEEEDEPV) are enriched in acidic residues. ANK repeat units lie at residues 117–155 (TDMT…DVTL), 160–189 (TNMN…PRVV), and 197–226 (NHGS…NPAL). Positions 314–356 (GTTEFASGQWVGVELDEPEGKNDGSVGGVRYFICPPKQGLFAS) constitute a CAP-Gly 1 domain. The segment at 365 to 413 (DAPPSSVTSTPRTPRMDFSRVTGKGRREHKGKKKTPSSPSLGSLQQRDR) is disordered. Over residues 367 to 377 (PPSSVTSTPRT) the composition is skewed to low complexity. Position 374 is a phosphothreonine (Thr374). Over residues 387–399 (GKGRREHKGKKKT) the composition is skewed to basic residues. Residues 400–409 (PSSPSLGSLQ) show a composition bias toward polar residues. Phosphoserine is present on Ser401. The CAP-Gly 2 domain maps to 436–478 (GKTDFAPGYWYGIELDQPTGKHDGSVFGVRYFTCPPRHGVFAP). A goLD region spans residues 488–547 (STDSPGDSVGAKKVHQVTMTQPKRTFTTVRTPKDIASENSISRLLFCCWFPWMLRAEMQS). 2 S-palmitoyl cysteine lipidation sites follow: Cys534 and Cys535.

As to quaternary structure, homodimer. Interacts with AKT1 and AKT2; when AKT1 and AKT2 are phosphorylated and activated, affinity is higher for AKT2. Interacts with ZDHHC13 (via ANK repeats). Interacts with ZDHHC17 (via ANK repeats). Palmitoylation by ZDHHC17 regulates association with the plasma membrane.

It is found in the cell membrane. The protein resides in the cytoplasm. The protein localises to the golgi apparatus. It localises to the golgi stack. Functions as a cytoplasmic linker protein. Involved in TGN-endosome dynamics. May modulate the cellular compartmentalization of AKT kinase family and promote its cell membrane localization, thereby playing a role in glucose transport in adipocytes. The polypeptide is CAP-Gly domain-containing linker protein 3 (CLIP3) (Pongo abelii (Sumatran orangutan)).